A 265-amino-acid chain; its full sequence is Tetrapyrrole-binding protein, chloroplastic (265 aa).

A disordered region spans residues 1–24 (MATTNSLHHHHHSSPSYTHHRNNL). Residues 1 to 69 (MATTNSLHHH…TAVSAVSTTN (69 aa)) constitute a chloroplast transit peptide. Over residues 7–23 (LHHHHHSSPSYTHHRNN) the composition is skewed to basic residues.

Interacts with CHLH, the protoporphyrin IX-binding subunit of Mg-chelatase. Monomer or extremely compact dimer.

The protein localises to the plastid. The protein resides in the chloroplast membrane. In terms of biological role, regulates chlorophyll synthesis and plastid-to-nucleus signal transduction by binding both the product and the substrate of Mg-chelatase, an enzyme that produces magnesium-protoporphyrin IX (Mg-Proto). Also activates Mg-chelatase. Neither binds abscisic acid (ABA) nor is involved in ABA signaling. The sequence is that of Tetrapyrrole-binding protein, chloroplastic (GUN4) from Arabidopsis thaliana (Mouse-ear cress).